We begin with the raw amino-acid sequence, 146 residues long: Neuropeptide Y receptor type 2 (146 aa).

At 1–8 (KMGPVLCH) the chain is on the extracellular side. Cys-7 and Cys-87 are oxidised to a cystine. Residues 9–29 (LVPYAQGLAVQVSTITLTVIA) traverse the membrane as a helical segment. Topologically, residues 30-49 (LDRHRCIVYHLESKISKQIS) are cytoplasmic. The helical transmembrane segment at 50–70 (FLIIGLAWGVSALLASPLAIF) threads the bilayer. The Extracellular segment spans residues 71–100 (REYSLIEIIPDFEIVACTEKWPGEEKGIYG). The chain crosses the membrane as a helical span at residues 101-121 (TVYSLLSLLILYVLPLGIISF). At 122–146 (SYARIWSKLKNHVSPGAAHDHYHQR) the chain is on the cytoplasmic side.

It belongs to the G-protein coupled receptor 1 family.

The protein resides in the cell membrane. In terms of biological role, receptor for neuropeptide Y and peptide YY. The protein is Neuropeptide Y receptor type 2 (NPY2R) of Ovis aries (Sheep).